The primary structure comprises 473 residues: Photosystem II CP43 reaction center protein (473 aa).

The propeptide occupies 1 to 14 (MKTLYSLRRFYPVE). N-acetylthreonine is present on threonine 15. Threonine 15 bears the Phosphothreonine mark. Helical transmembrane passes span 69-93 (LFEV…PHLA), 134-155 (LLGP…KDRN), 178-200 (KALY…RKIT), 255-275 (KPFA…LSYS), and 291-312 (WFNN…ASQA). A [CaMn4O5] cluster-binding site is contributed by glutamate 367. A helical membrane pass occupies residues 447 to 471 (RARAAAAGFEKGIDRDLEPVLSMTP).

The protein belongs to the PsbB/PsbC family. PsbC subfamily. In terms of assembly, PSII is composed of 1 copy each of membrane proteins PsbA, PsbB, PsbC, PsbD, PsbE, PsbF, PsbH, PsbI, PsbJ, PsbK, PsbL, PsbM, PsbT, PsbX, PsbY, PsbZ, Psb30/Ycf12, at least 3 peripheral proteins of the oxygen-evolving complex and a large number of cofactors. It forms dimeric complexes. Binds multiple chlorophylls and provides some of the ligands for the Ca-4Mn-5O cluster of the oxygen-evolving complex. It may also provide a ligand for a Cl- that is required for oxygen evolution. PSII binds additional chlorophylls, carotenoids and specific lipids. serves as cofactor.

Its subcellular location is the plastid. It localises to the chloroplast thylakoid membrane. In terms of biological role, one of the components of the core complex of photosystem II (PSII). It binds chlorophyll and helps catalyze the primary light-induced photochemical processes of PSII. PSII is a light-driven water:plastoquinone oxidoreductase, using light energy to abstract electrons from H(2)O, generating O(2) and a proton gradient subsequently used for ATP formation. In Dioscorea elephantipes (Elephant's foot yam), this protein is Photosystem II CP43 reaction center protein.